The sequence spans 268 residues: Interleukin-1 beta (268 aa).

A propeptide spanning residues 1-116 (MAEVPELASE…TRNNDACVHD (116 aa)) is cleaved from the precursor.

Belongs to the IL-1 family. Monomer. In its precursor form, weakly interacts with full-length MEFV; the mature cytokine does not interact at all. Interacts with integrins ITGAV:ITGBV and ITGA5:ITGB1; integrin-binding is required for IL1B signaling. Interacts with cargo receptor TMED10; the interaction is direct and is required for the secretion of IL1B mature form. Interacts with HSP90AB1; the interaction facilitates cargo translocation into the ERGIC. Interacts with HSP90B1; the interaction facilitates cargo translocation into the ERGIC.

It localises to the cytoplasm. Its subcellular location is the cytosol. The protein localises to the secreted. The protein resides in the lysosome. It is found in the extracellular exosome. Potent pro-inflammatory cytokine. Initially discovered as the major endogenous pyrogen, induces prostaglandin synthesis, neutrophil influx and activation, T-cell activation and cytokine production, B-cell activation and antibody production, and fibroblast proliferation and collagen production. Promotes Th17 differentiation of T-cells. Synergizes with IL12/interleukin-12 to induce IFNG synthesis from T-helper 1 (Th1) cells. Plays a role in angiogenesis by inducing VEGF production synergistically with TNF and IL6. Involved in transduction of inflammation downstream of pyroptosis: its mature form is specifically released in the extracellular milieu by passing through the gasdermin-D (GSDMD) pore. The protein is Interleukin-1 beta (IL1B) of Macaca fascicularis (Crab-eating macaque).